Consider the following 331-residue polypeptide: 6-phosphogluconolactonase (331 aa).

Lys-287 is modified (N6-acetyllysine).

It belongs to the cycloisomerase 2 family.

It carries out the reaction 6-phospho-D-glucono-1,5-lactone + H2O = 6-phospho-D-gluconate + H(+). It functions in the pathway carbohydrate degradation; pentose phosphate pathway; D-ribulose 5-phosphate from D-glucose 6-phosphate (oxidative stage): step 2/3. Catalyzes the hydrolysis of 6-phosphogluconolactone to 6-phosphogluconate. In Shigella flexneri, this protein is 6-phosphogluconolactonase.